The chain runs to 291 residues: Lysosomal amino acid transporter 1 homolog (291 aa).

Residues 1 to 37 are Lumenal-facing; that stretch reads MVWKKLGSRNFSSCPSGSIQWIWDVLGECAQDGWDEA. N-linked (GlcNAc...) asparagine glycosylation is present at N10. Residues 34 to 100 form the PQ-loop 1 domain; it reads WDEASVGLGL…LADQLPLQTY (67 aa). The helical transmembrane segment at 38–58 threads the bilayer; sequence SVGLGLISILCFAASTFPQFI. The Cytoplasmic segment spans residues 59–71; that stretch reads KAYKTGNMDQALS. The helical transmembrane segment at 72–92 threads the bilayer; sequence LWFLLGWIGGDSCNLIGSFLA. At 93–98 the chain is on the lumenal side; the sequence is DQLPLQ. A helical transmembrane segment spans residues 99–119; the sequence is TYTAVYYVLADLVMLTLYFYY. Topologically, residues 120–134 are cytoplasmic; sequence KFRTRPSLLSAPINS. Residues 135–155 traverse the membrane as a helical segment; that stretch reads VLLFLMGMACATPLLSAAGPV. The Lumenal segment spans residues 156–182; it reads AAPREAFRGRALLSVESGSKPFTRQEV. Residues 183-203 form a helical membrane-spanning segment; the sequence is IGFVIGSISSVLYLLSRLPQI. The PQ-loop 2 domain maps to 184–243; that stretch reads GFVIGSISSVLYLLSRLPQIRTNFLRKSTQGISYSLFALVMLGNTLYGLSVLLKNPEEGQ. At 204-214 the chain is on the cytoplasmic side; it reads RTNFLRKSTQG. Residues 215 to 235 traverse the membrane as a helical segment; the sequence is ISYSLFALVMLGNTLYGLSVL. At 236–254 the chain is on the lumenal side; it reads LKNPEEGQSEGSYLLHHLP. A helical membrane pass occupies residues 255–275; that stretch reads WLVGSLGVLLLDTIISIQFLV. At 276-291 the chain is on the cytoplasmic side; sequence YRRSTAASELEPLLPS. Positions 288-289 match the Di-leucine motif motif; it reads LL.

This sequence belongs to the laat-1 family.

It localises to the lysosome membrane. Amino acid transporter that specifically mediates the pH-dependent export of the cationic amino acids arginine, histidine and lysine from lysosomes. This Homo sapiens (Human) protein is Lysosomal amino acid transporter 1 homolog.